The sequence spans 96 residues: UPF0235 protein YPN_3141 (96 aa).

It belongs to the UPF0235 family.

In Yersinia pestis bv. Antiqua (strain Nepal516), this protein is UPF0235 protein YPN_3141.